Consider the following 467-residue polypeptide: Ribosome biogenesis protein YTM1 (467 aa).

Residues 8-95 (IKIKFFTNEE…ETFLSLEYTR (88 aa)) are ubiquitin-like (UBL) domain. The interval 105–467 (SFNNEDWISS…QINKGSDISK (363 aa)) is sufficient for interaction with ERB1 and association with 66S pre-ribosomes. WD repeat units lie at residues 120–159 (KTLP…EKQY), 161–199 (GHSG…GSIP), 216–255 (GHKA…MTTI), 293–333 (SHTQ…CIDT), 335–374 (STGY…NTTE), 382–422 (GHTN…SLYT), and 432–467 (KGAD…DISK).

This sequence belongs to the WD repeat WDR12/YTM1 family. In terms of assembly, component of the NOP7 complex, composed of ERB1, NOP7 and YTM1. The complex is held together by ERB1, which interacts with NOP7 via its N-terminal domain and with YTM1 via a high-affinity interaction between the seven-bladed beta-propeller domains of the 2 proteins. The NOP7 complex associates with the 66S pre-ribosome. Interacts (via UBL domain) with MDN1 (via VWFA/MIDAS domain).

The protein localises to the nucleus. Its subcellular location is the nucleolus. The protein resides in the nucleoplasm. Functionally, component of the NOP7 complex, which is required for maturation of the 25S and 5.8S ribosomal RNAs and formation of the 60S ribosome. This is Ribosome biogenesis protein YTM1 from Scheffersomyces stipitis (strain ATCC 58785 / CBS 6054 / NBRC 10063 / NRRL Y-11545) (Yeast).